The primary structure comprises 1093 residues: MEASAGLVAGSHNRNELVVIRRDGDPGPKPLRQQNGQVCQICGDDVGLNPDGEPFVACNECAFPVCRDCYEYERREGTQNCPQCKTRFKRLRGCARVPGDEEEDGVDDLENEFNWRDRNDSQYVAESMLHAHMSYGRGGVDVNGVPQPFQPNPNVPLLTDGQMVDDIPPEQHALVPSFMGGGGKRIHPLPYADPNLPVQPRSMDPSKDLAAYGYGSVAWKERMESWKQKQERLHQMRNDGGGKDWDGDGDDGDLPLMDEARQPLSRKVPIPSSQINPYRMVIIIRLVVLGFFFHYRVMHPVPDAFALWLISVICEIWFAMSWILDQFPKWFPIERETYLDRLTLRFDKEGQTSQLAPIDFFVSTVDPLKEPPLVTANTVLSILAVDYPVDKVSCYVSDDGAAMLTFEALSETSEFAKKWVPFCKKYSIEPRAPEWYFQQKIDYLKDKVAPYFVRERRAMKREYEEFKVRINALVAKAQKVPEEGWTMQDGTPWPGNNVRDHPGMIQVFLGQSGGHDIEGNELPRLVYVSREKRPGYNHHKKAGAMNALVRVSAVLTNAPYMLNLDCDHYINNSKAIKEAMCFMMDPLVGKKVCYVQFPQRFDGIDRHDRYANRNVVFFDINMKGLDGIQGPIYVGTGCVFRRQALYGYDAPKTKKPPSRTCNCWPKWCICCCCFGDRKSKKKTTKPKTEKKKRSFFKRAENQSPAYALGEIEEGAPGAENEKAGIVNQQKLEKKFGQSSVFVASTLLENGGTLKSASPASLLKEAIHVISCGYEDKTDWGKEIGWIYGSVTEDILTGFKMHCHGWRSIYCIPKLPAFKGSAPLNLSDRLHQVLRWALGSVEIFFSNHCPLWYGYGGGLKCLERFSYINSIVYPFTSIPLLAYCTLPAICLLTGKFITPELTNVASLWFMSLFICIFATGILEMRWSGVGIDDWWRNEQFWVIGGVSSHLFALFQGLLKVIAGIDTSFTVTSKGGDDEEFSELYTFKWTTLLIPPTTLLLLNFIGVVAGVSNAINNGYESWGPLFGKLFFAFWVIVHLYPFLKGLVGRQNRTPTIVIVWSILLASIFSLLWVRIDPFLAKNDGPLLEECGLDCN.

The Cytoplasmic segment spans residues 1 to 280 (MEASAGLVAG…PSSQINPYRM (280 aa)). Zn(2+)-binding residues include Cys39, Cys42, Cys58, Cys61, Cys66, Cys69, Cys81, and Cys84. An RING-type; degenerate zinc finger spans residues 39 to 85 (CQICGDDVGLNPDGEPFVACNECAFPVCRDCYEYERREGTQNCPQCK). Residues 233-246 (LHQMRNDGGGKDWD) are compositionally biased toward basic and acidic residues. The disordered stretch occupies residues 233–257 (LHQMRNDGGGKDWDGDGDDGDLPLM). The helical transmembrane segment at 281–301 (VIIIRLVVLGFFFHYRVMHPV) threads the bilayer. The Extracellular portion of the chain corresponds to 302–303 (PD). The chain crosses the membrane as a helical span at residues 304 to 324 (AFALWLISVICEIWFAMSWIL). At 325 to 869 (DQFPKWFPIE…CLERFSYINS (545 aa)) the chain is on the cytoplasmic side. Residues Ser363, Lys369, Glu370, and Asp399 each coordinate UDP-alpha-D-glucose. Asp399 is a catalytic residue. A coiled-coil region spans residues 453 to 480 (VRERRAMKREYEEFKVRINALVAKAQKV). A UDP-alpha-D-glucose-binding site is contributed by Lys540. Residues Lys541 and Asp565 each contribute to the Mn(2+) site. The active site involves Asp793. A helical membrane pass occupies residues 870-890 (IVYPFTSIPLLAYCTLPAICL). Over 891–902 (LTGKFITPELTN) the chain is Extracellular. The chain crosses the membrane as a helical span at residues 903–923 (VASLWFMSLFICIFATGILEM). The Cytoplasmic segment spans residues 924 to 939 (RWSGVGIDDWWRNEQF). The helical transmembrane segment at 940–960 (WVIGGVSSHLFALFQGLLKVI) threads the bilayer. Over 961 to 988 (AGIDTSFTVTSKGGDDEEFSELYTFKWT) the chain is Extracellular. Residues 989-1009 (TLLIPPTTLLLLNFIGVVAGV) traverse the membrane as a helical segment. Residues 1010–1020 (SNAINNGYESW) lie on the Cytoplasmic side of the membrane. Residues 1021 to 1041 (GPLFGKLFFAFWVIVHLYPFL) form a helical membrane-spanning segment. Residues 1042–1050 (KGLVGRQNR) are Extracellular-facing. Residues 1051–1071 (TPTIVIVWSILLASIFSLLWV) traverse the membrane as a helical segment. The Cytoplasmic segment spans residues 1072 to 1093 (RIDPFLAKNDGPLLEECGLDCN).

Belongs to the glycosyltransferase 2 family. Plant cellulose synthase subfamily. The cofactor is Mn(2+). Requires Zn(2+) as cofactor.

Its subcellular location is the cell membrane. The enzyme catalyses [(1-&gt;4)-beta-D-glucosyl](n) + UDP-alpha-D-glucose = [(1-&gt;4)-beta-D-glucosyl](n+1) + UDP + H(+). It functions in the pathway glycan metabolism; plant cellulose biosynthesis. Functionally, probable catalytic subunit of cellulose synthase terminal complexes ('rosettes'), required for beta-1,4-glucan microfibril crystallization, a major mechanism of the cell wall formation. This is Probable cellulose synthase A catalytic subunit 3 [UDP-forming] (CESA3) from Oryza sativa subsp. japonica (Rice).